Reading from the N-terminus, the 178-residue chain is Cytochrome b6-f complex iron-sulfur subunit 3 (178 aa).

The chain crosses the membrane as a helical span at residues 20–42 (FITGATVAVTAGAALYPAGKFLI). A Rieske domain is found at 65–161 (PASQILAEPP…VAVIDNSILI (97 aa)). [2Fe-2S] cluster contacts are provided by C107, H109, C125, and H128. An intrachain disulfide couples C112 to C127.

Belongs to the Rieske iron-sulfur protein family. In terms of assembly, the 4 large subunits of the cytochrome b6-f complex are cytochrome b6, subunit IV (17 kDa polypeptide, PetD), cytochrome f and the Rieske protein, while the 4 small subunits are PetG, PetL, PetM and PetN. The complex functions as a dimer. It depends on [2Fe-2S] cluster as a cofactor.

It is found in the cellular thylakoid membrane. It carries out the reaction 2 oxidized [plastocyanin] + a plastoquinol + 2 H(+)(in) = 2 reduced [plastocyanin] + a plastoquinone + 4 H(+)(out). Its function is as follows. Component of the cytochrome b6-f complex, which mediates electron transfer between photosystem II (PSII) and photosystem I (PSI), cyclic electron flow around PSI, and state transitions. This chain is Cytochrome b6-f complex iron-sulfur subunit 3, found in Nostoc sp. (strain PCC 7120 / SAG 25.82 / UTEX 2576).